Here is a 474-residue protein sequence, read N- to C-terminus: 3-isopropylmalate dehydratase large subunit (474 aa).

Residues Cys-355, Cys-415, and Cys-418 each contribute to the [4Fe-4S] cluster site.

Belongs to the aconitase/IPM isomerase family. LeuC type 1 subfamily. Heterodimer of LeuC and LeuD. [4Fe-4S] cluster is required as a cofactor.

It carries out the reaction (2R,3S)-3-isopropylmalate = (2S)-2-isopropylmalate. It functions in the pathway amino-acid biosynthesis; L-leucine biosynthesis; L-leucine from 3-methyl-2-oxobutanoate: step 2/4. Catalyzes the isomerization between 2-isopropylmalate and 3-isopropylmalate, via the formation of 2-isopropylmaleate. The chain is 3-isopropylmalate dehydratase large subunit from Shewanella sp. (strain MR-4).